The primary structure comprises 435 residues: tRNA modification GTPase MnmE (435 aa).

Residues Arg20, Glu77, and Lys117 each contribute to the (6S)-5-formyl-5,6,7,8-tetrahydrofolate site. Residues 214–359 (GFKIVIVGAP…FMKELESFCL (146 aa)) form the TrmE-type G domain. Residues 224-229 (NSGKSS), 243-249 (TEEAGTT), and 268-271 (DTAG) contribute to the GTP site. Residues Ser228 and Thr249 each contribute to the Mg(2+) site. Lys435 serves as a coordination point for (6S)-5-formyl-5,6,7,8-tetrahydrofolate.

It belongs to the TRAFAC class TrmE-Era-EngA-EngB-Septin-like GTPase superfamily. TrmE GTPase family. Homodimer. Heterotetramer of two MnmE and two MnmG subunits. Requires K(+) as cofactor.

It is found in the cytoplasm. Its function is as follows. Exhibits a very high intrinsic GTPase hydrolysis rate. Involved in the addition of a carboxymethylaminomethyl (cmnm) group at the wobble position (U34) of certain tRNAs, forming tRNA-cmnm(5)s(2)U34. This is tRNA modification GTPase MnmE from Bartonella henselae (strain ATCC 49882 / DSM 28221 / CCUG 30454 / Houston 1) (Rochalimaea henselae).